A 621-amino-acid polypeptide reads, in one-letter code: tRNA uridine 5-carboxymethylaminomethyl modification enzyme MnmG (621 aa).

Position 11–16 (11–16) interacts with FAD; sequence GGGHAG. 270–284 provides a ligand contact to NAD(+); the sequence is GPRYCPSIEDKINRF.

The protein belongs to the MnmG family. In terms of assembly, homodimer. Heterotetramer of two MnmE and two MnmG subunits. Requires FAD as cofactor.

It localises to the cytoplasm. In terms of biological role, NAD-binding protein involved in the addition of a carboxymethylaminomethyl (cmnm) group at the wobble position (U34) of certain tRNAs, forming tRNA-cmnm(5)s(2)U34. The chain is tRNA uridine 5-carboxymethylaminomethyl modification enzyme MnmG from Helicobacter pylori (strain Shi470).